Here is a 183-residue protein sequence, read N- to C-terminus: Non-classical export protein 2 homolog (183 aa).

Residues 1-8 (MVGIRQYG) are Cytoplasmic-facing. The helical transmembrane segment at 9–29 (VFTWVFRTFQLAIDTIVLALA) threads the bilayer. Over 30–44 (SALVNQQTSGGSPGK) the chain is Extracellular. A helical membrane pass occupies residues 45-65 (INFSVAVGSFAILTFFLTAVG). Topologically, residues 66–75 (RFLPTILGNP) are cytoplasmic. The helical transmembrane segment at 76–96 (WLIAFYDFVNWVFALTGGCCI) threads the bilayer. The Extracellular portion of the chain corresponds to 97–131 (AVAIRVHACDNQKYLDRNHYTQGSMRRCQELKALC). Residues 132–152 (FFLWFMFGLYVASFIVQIFIA) traverse the membrane as a helical segment. At 153 to 183 (KNDTPNYTFRGRGRGKGSGPAVAPRPVMSAV) the chain is on the cytoplasmic side. A disordered region spans residues 163 to 183 (GRGRGKGSGPAVAPRPVMSAV).

The protein belongs to the NCE102 family.

The protein localises to the cytoplasm. Its subcellular location is the golgi apparatus membrane. The protein resides in the cell membrane. In terms of biological role, involved in membrane organization and might act as a sensor of sphingolipids that regulates plasma membrane function. Involved in a novel pathway of export of proteins that lack a cleavable signal sequence. The polypeptide is Non-classical export protein 2 homolog (fhn1) (Schizosaccharomyces pombe (strain 972 / ATCC 24843) (Fission yeast)).